We begin with the raw amino-acid sequence, 453 residues long: Ras association domain-containing protein 10 (453 aa).

Residues 1-107 (MENEEWKVSV…VKFVLVRSEA (107 aa)) form the Ras-associating domain. A coiled-coil region spans residues 262 to 295 (QKCDEVLLLQEQISRQEEAMEQMTVQIQEELNKR). The segment covering 299–310 (RRQEELSSKEQE) has biased composition (basic and acidic residues). Disordered regions lie at residues 299–322 (RRQEELSSKEQESSLSDSGADQGG) and 402–453 (GVTT…ESLV). 2 stretches are compositionally biased toward polar residues: residues 402-411 (GVTTTGSPTD) and 433-444 (TGLSSMHSQDSD).

The protein localises to the cytoplasm. It is found in the cytosol. It localises to the cytoskeleton. Its subcellular location is the microtubule organizing center. The protein resides in the centrosome. The protein localises to the spindle pole. In terms of biological role, may play role in regulating embryonic neurogenesis. The sequence is that of Ras association domain-containing protein 10 (rassf10) from Xenopus laevis (African clawed frog).